The primary structure comprises 279 residues: Phosphatidylglycerol--prolipoprotein diacylglyceryl transferase (279 aa).

7 consecutive transmembrane segments (helical) span residues 25–45 (WYGL…KFFV), 60–80 (YFIW…ILIY), 103–123 (FVGI…IATI), 133–153 (LWSL…FGRI), 181–201 (PSQL…LYFY), 209–229 (GELI…TEFL), and 236–256 (IGYF…MLIL). Arginine 152 is a binding site for a 1,2-diacyl-sn-glycero-3-phospho-(1'-sn-glycerol).

This sequence belongs to the Lgt family.

The protein resides in the cell inner membrane. It catalyses the reaction L-cysteinyl-[prolipoprotein] + a 1,2-diacyl-sn-glycero-3-phospho-(1'-sn-glycerol) = an S-1,2-diacyl-sn-glyceryl-L-cysteinyl-[prolipoprotein] + sn-glycerol 1-phosphate + H(+). It functions in the pathway protein modification; lipoprotein biosynthesis (diacylglyceryl transfer). Its function is as follows. Catalyzes the transfer of the diacylglyceryl group from phosphatidylglycerol to the sulfhydryl group of the N-terminal cysteine of a prolipoprotein, the first step in the formation of mature lipoproteins. This is Phosphatidylglycerol--prolipoprotein diacylglyceryl transferase from Campylobacter hominis (strain ATCC BAA-381 / DSM 21671 / CCUG 45161 / LMG 19568 / NCTC 13146 / CH001A).